The sequence spans 397 residues: Elongation factor Tu-2 (397 aa).

The 197-residue stretch at 10–206 (KPHVNIGTIG…AVDEFVPEPV (197 aa)) folds into the tr-type G domain. Positions 19-26 (GHIDHGKT) are G1. 19–26 (GHIDHGKT) is a GTP binding site. Thr26 provides a ligand contact to Mg(2+). The G2 stretch occupies residues 62–66 (GITIS). The interval 83-86 (DCPG) is G3. Residues 83–87 (DCPGH) and 138–141 (NKTD) contribute to the GTP site. The tract at residues 138–141 (NKTD) is G4. The G5 stretch occupies residues 176-178 (SAL).

It belongs to the TRAFAC class translation factor GTPase superfamily. Classic translation factor GTPase family. EF-Tu/EF-1A subfamily. As to quaternary structure, monomer.

The protein localises to the cytoplasm. It carries out the reaction GTP + H2O = GDP + phosphate + H(+). GTP hydrolase that promotes the GTP-dependent binding of aminoacyl-tRNA to the A-site of ribosomes during protein biosynthesis. In Streptomyces ramocissimus, this protein is Elongation factor Tu-2.